Here is a 798-residue protein sequence, read N- to C-terminus: PR domain zinc finger protein 4 (798 aa).

The 118-residue stretch at 408 to 525 (KQLVLRQSIV…PENELLFYYS (118 aa)) folds into the SET domain. C2H2-type zinc fingers lie at residues 586 to 608 (WKCSMCPQAFISPSKLHVHFMGH), 614 to 636 (HKCDFCSKAFSDPSNLRTHLKIH), 642 to 664 (YRCTLCDKSFTQKAHLESHMVIH), 670 to 692 (LKCDYCDKLFMRRQDLKQHVLIH), and 698 to 720 (IKCPKCDKLFLRTNHLKKHLNSH). The C2H2-type 6; degenerate zinc finger occupies 726-747 (YVCEKCTKAYLTKYHLTRHLKA). Positions 750 to 798 (EPASSSSAQDDEDEDGDSGEDGLPGSMTTEGCRMSSAVYSADESLSAHK) are disordered. The span at 758–769 (QDDEDEDGDSGE) shows a compositional bias: acidic residues.

The protein belongs to the class V-like SAM-binding methyltransferase superfamily.

It localises to the nucleus. May function as a transcription factor involved in cell differentiation. The polypeptide is PR domain zinc finger protein 4 (Prdm4) (Rattus norvegicus (Rat)).